We begin with the raw amino-acid sequence, 106 residues long: Iron-sulfur cluster assembly protein CyaY (106 aa).

It belongs to the frataxin family.

In terms of biological role, involved in iron-sulfur (Fe-S) cluster assembly. May act as a regulator of Fe-S biogenesis. The sequence is that of Iron-sulfur cluster assembly protein CyaY from Escherichia coli O7:K1 (strain IAI39 / ExPEC).